A 95-amino-acid polypeptide reads, in one-letter code: Large ribosomal subunit protein bL25 (95 aa).

Belongs to the bacterial ribosomal protein bL25 family. Part of the 50S ribosomal subunit; part of the 5S rRNA/L5/L18/L25 subcomplex. Contacts the 5S rRNA. Binds to the 5S rRNA independently of L5 and L18.

Functionally, this is one of the proteins that binds to the 5S RNA in the ribosome where it forms part of the central protuberance. The polypeptide is Large ribosomal subunit protein bL25 (Shewanella oneidensis (strain ATCC 700550 / JCM 31522 / CIP 106686 / LMG 19005 / NCIMB 14063 / MR-1)).